The sequence spans 113 residues: uncharacterized protein (113 aa).

An HTH hxlR-type domain is found at 16 to 113 (TPFGYTLSLI…CEWGVKNQNN (98 aa)).

This is an uncharacterized protein from Halalkalibacterium halodurans (strain ATCC BAA-125 / DSM 18197 / FERM 7344 / JCM 9153 / C-125) (Bacillus halodurans).